The sequence spans 508 residues: Hydroxymethylglutaryl-CoA synthase, mitochondrial (508 aa).

A mitochondrion-targeting transit peptide spans 1–37 (MQRLLAPARRVLQVKRVMQESSLSPAHLLPAAQQRFS). K52 bears the N6-succinyllysine mark. Residues E80 and A81 each coordinate (3S)-3-hydroxy-3-methylglutaryl-CoA. N6-acetyllysine; alternate occurs at positions 83 and 118. N6-succinyllysine; alternate occurs at positions 83 and 118. E132 functions as the Proton donor/acceptor in the catalytic mechanism. C166, N204, and T208 together coordinate (3S)-3-hydroxy-3-methylglutaryl-CoA. The active-site Acyl-thioester intermediate is C166. The residue at position 221 (K221) is an N6-succinyllysine. At K243 the chain carries N6-acetyllysine. Residue K256 is modified to N6-acetyllysine; alternate. K256 carries the post-translational modification N6-succinyllysine; alternate. (3S)-3-hydroxy-3-methylglutaryl-CoA contacts are provided by S258 and H301. H301 acts as the Proton donor/acceptor in catalysis. N6-acetyllysine is present on K306. A (3S)-3-hydroxy-3-methylglutaryl-CoA-binding site is contributed by K310. An N6-acetyllysine; alternate mark is found at K310 and K327. N6-succinyllysine; alternate occurs at positions 310 and 327. The residue at position 333 (K333) is an N6-succinyllysine. An N6-acetyllysine; alternate mark is found at K342, K350, K354, and K358. K342, K350, K354, and K358 each carry N6-succinyllysine; alternate. Residues N380 and S414 each coordinate (3S)-3-hydroxy-3-methylglutaryl-CoA. An N6-acetyllysine modification is found at K427. S433 carries the post-translational modification Phosphoserine. An N6-acetyllysine modification is found at K437. S440 carries the post-translational modification Phosphoserine. At K447 the chain carries N6-acetyllysine; alternate. The residue at position 447 (K447) is an N6-succinyllysine; alternate. Position 456 is a phosphoserine (S456). K473 is subject to N6-acetyllysine; alternate. K473 carries the post-translational modification N6-succinyllysine; alternate. S477 is modified (phosphoserine).

This sequence belongs to the thiolase-like superfamily. HMG-CoA synthase family. Homodimer. Succinylated. Desuccinylated by SIRT5. Succinylation, at least at Lys-83 and Lys-310, inhibits the enzymatic activity. Liver and kidney.

The protein resides in the mitochondrion. The enzyme catalyses acetoacetyl-CoA + acetyl-CoA + H2O = (3S)-3-hydroxy-3-methylglutaryl-CoA + CoA + H(+). It functions in the pathway metabolic intermediate biosynthesis; (R)-mevalonate biosynthesis; (R)-mevalonate from acetyl-CoA: step 2/3. Catalyzes the first irreversible step in ketogenesis, condensing acetyl-CoA to acetoacetyl-CoA to form HMG-CoA, which is converted by HMG-CoA reductase (HMGCR) into mevalonate. The protein is Hydroxymethylglutaryl-CoA synthase, mitochondrial (Hmgcs2) of Rattus norvegicus (Rat).